We begin with the raw amino-acid sequence, 93 residues long: Putative regulatory protein Clos_1422 (93 aa).

This sequence belongs to the RemA family.

This is Putative regulatory protein Clos_1422 from Alkaliphilus oremlandii (strain OhILAs) (Clostridium oremlandii (strain OhILAs)).